The following is an 876-amino-acid chain: Monofunctional isopimaradiene synthase, chloroplastic (876 aa).

The N-terminal 64 residues, 1–64, are a transit peptide targeting the chloroplast; sequence MAMPSYSSLS…YLRLGSRKII (64 aa). D628, D632, N772, T776, and E780 together coordinate Mg(2+). A DDXXD motif motif is present at residues 628 to 632; sequence DDLYD.

This sequence belongs to the terpene synthase family. Tpsd subfamily. Requires Mg(2+) as cofactor.

The protein localises to the plastid. The protein resides in the chloroplast. The enzyme catalyses (+)-copalyl diphosphate = isopimara-7,15-diene + diphosphate. It participates in terpene metabolism; oleoresin biosynthesis. Involved in defensive oleoresin formation in conifers in response to insect attack or other injury. Involved in diterpene (C20) olefins biosynthesis. Monofunctional enzyme lacking the DXDD motif in the class II active site relevant for the cyclization of geranylgeranyl diphosphate (GGPP). Requires (+)-copalyl diphosphate ((+)-CPP) as substrate, but no activity with GGPP or ent-CPP. Isopimaradiene is the major products of the enzyme followed by sandaracopimaradiene. This chain is Monofunctional isopimaradiene synthase, chloroplastic, found in Pinus contorta (Shore pine).